Consider the following 427-residue polypeptide: Adenylosuccinate synthetase (427 aa).

GTP is bound by residues 12-18 (GDEGKGK) and 40-42 (GHT). Residue D13 is the Proton acceptor of the active site. The Mg(2+) site is built by D13 and G40. Residues 13-16 (DEGK), 38-41 (NAGH), T126, R140, Q221, T236, and R299 each bind IMP. H41 (proton donor) is an active-site residue. 295 to 301 (STTKRPR) lines the substrate pocket. GTP-binding positions include R301, 327-329 (KLD), and 409-411 (SVG).

This sequence belongs to the adenylosuccinate synthetase family. As to quaternary structure, homodimer. Requires Mg(2+) as cofactor.

It localises to the cytoplasm. It carries out the reaction IMP + L-aspartate + GTP = N(6)-(1,2-dicarboxyethyl)-AMP + GDP + phosphate + 2 H(+). Its pathway is purine metabolism; AMP biosynthesis via de novo pathway; AMP from IMP: step 1/2. In terms of biological role, plays an important role in the de novo pathway of purine nucleotide biosynthesis. Catalyzes the first committed step in the biosynthesis of AMP from IMP. In Borrelia recurrentis (strain A1), this protein is Adenylosuccinate synthetase.